Consider the following 128-residue polypeptide: Iron-sulfur cluster insertion protein ErpA (128 aa).

Cys-56, Cys-120, and Cys-122 together coordinate iron-sulfur cluster.

The protein belongs to the HesB/IscA family. In terms of assembly, homodimer. Iron-sulfur cluster serves as cofactor.

Required for insertion of 4Fe-4S clusters for at least IspG. The chain is Iron-sulfur cluster insertion protein ErpA from Xanthomonas axonopodis pv. citri (strain 306).